The chain runs to 294 residues: Putative HTH-type transcriptional regulatory protein STK_12680 (294 aa).

The HTH cro/C1-type domain maps to 123 to 175 (LKKKREEMGLSLGEVAQALGVSRISIYDYEREDSYVSIDIAEKLVELFGDDIL). The H-T-H motif DNA-binding region spans 134 to 153 (LGEVAQALGVSRISIYDYER).

In Sulfurisphaera tokodaii (strain DSM 16993 / JCM 10545 / NBRC 100140 / 7) (Sulfolobus tokodaii), this protein is Putative HTH-type transcriptional regulatory protein STK_12680.